Reading from the N-terminus, the 62-residue chain is Translational regulator CsrA (62 aa).

It belongs to the CsrA/RsmA family. In terms of assembly, homodimer; the beta-strands of each monomer intercalate to form a hydrophobic core, while the alpha-helices form wings that extend away from the core.

The protein resides in the cytoplasm. A key translational regulator that binds mRNA to regulate translation initiation and/or mRNA stability. Mediates global changes in gene expression, shifting from rapid growth to stress survival by linking envelope stress, the stringent response and the catabolite repression systems. Usually binds in the 5'-UTR; binding at or near the Shine-Dalgarno sequence prevents ribosome-binding, repressing translation, binding elsewhere in the 5'-UTR can activate translation and/or stabilize the mRNA. Its function is antagonized by small RNA(s). The sequence is that of Translational regulator CsrA from Idiomarina loihiensis (strain ATCC BAA-735 / DSM 15497 / L2-TR).